We begin with the raw amino-acid sequence, 344 residues long: MLQRARLWPPIFTSRCAPFPFSRSISIPYRRMAGVPSTYDAPVHIAVIGGTGISSLPGFELAATLDVDTPWGKPSSPISILQHNSPTTGKPVPVAFLSRHGLHHEHAPHEVKNQANIAALRHIGVRTIIAFSAVGSLQEEVRPRDFVVPDQIIDRTKGIRPFTFFEKGMVGHVGFGDPFDKSLAEIVRKCGHSLEGEGVRLHDKGLLICMEGPQFSTRAESNLYRTWGGSVINMSALPEAKLAREAEISYQMICMATDYDCWRGDGSEDVNVEMVMAHMKANAENARRFVGAVLNELTKEEHGELVLAKHIEGQMRFAGAMTKKEGRGQDAEKKLQWLFPGYFD.

Residues Thr51, 99-100, and 132-133 contribute to the phosphate site; these read RH and SA. Met234 provides a ligand contact to substrate. Ser235 is a binding site for phosphate. 258-260 provides a ligand contact to substrate; that stretch reads DYD.

It belongs to the PNP/MTAP phosphorylase family. MTAP subfamily. As to quaternary structure, homotrimer.

It is found in the cytoplasm. Its subcellular location is the nucleus. It catalyses the reaction S-methyl-5'-thioadenosine + phosphate = 5-(methylsulfanyl)-alpha-D-ribose 1-phosphate + adenine. Its pathway is amino-acid biosynthesis; L-methionine biosynthesis via salvage pathway; S-methyl-5-thio-alpha-D-ribose 1-phosphate from S-methyl-5'-thioadenosine (phosphorylase route): step 1/1. In terms of biological role, catalyzes the reversible phosphorylation of S-methyl-5'-thioadenosine (MTA) to adenine and 5-methylthioribose-1-phosphate. Involved in the breakdown of MTA, a major by-product of polyamine biosynthesis. Responsible for the first step in the methionine salvage pathway after MTA has been generated from S-adenosylmethionine. Has broad substrate specificity with 6-aminopurine nucleosides as preferred substrates. This Phaeosphaeria nodorum (strain SN15 / ATCC MYA-4574 / FGSC 10173) (Glume blotch fungus) protein is S-methyl-5'-thioadenosine phosphorylase.